Here is a 291-residue protein sequence, read N- to C-terminus: NAD kinase (291 aa).

Aspartate 73 (proton acceptor) is an active-site residue. NAD(+) contacts are provided by residues 73 to 74, 147 to 148, arginine 175, aspartate 177, 188 to 193, alanine 212, and glutamine 246; these read DG, ND, and TAYALS.

This sequence belongs to the NAD kinase family. A divalent metal cation serves as cofactor.

Its subcellular location is the cytoplasm. The enzyme catalyses NAD(+) + ATP = ADP + NADP(+) + H(+). Functionally, involved in the regulation of the intracellular balance of NAD and NADP, and is a key enzyme in the biosynthesis of NADP. Catalyzes specifically the phosphorylation on 2'-hydroxyl of the adenosine moiety of NAD to yield NADP. The protein is NAD kinase of Polaromonas sp. (strain JS666 / ATCC BAA-500).